The following is a 328-amino-acid chain: Delta(3,5)-Delta(2,4)-dienoyl-CoA isomerase, mitochondrial (328 aa).

The N-terminal 26 residues, 1–26, are a transit peptide targeting the mitochondrion; that stretch reads MAAGIVASRRLRDLLTRRLTASNYPG. Substrate-binding positions include 116–120 and Gly-174; that span reads AGVDL. Lys-231 is modified (N6-succinyllysine). At Ser-268 the chain carries Phosphoserine. The Microbody targeting signal signature appears at 326–328; that stretch reads SKL. Lys-327 is subject to N6-acetyllysine.

It belongs to the enoyl-CoA hydratase/isomerase family. As to quaternary structure, homohexamer.

It localises to the mitochondrion. Its subcellular location is the peroxisome. The catalysed reaction is (3E,5Z)-octadienoyl-CoA = (2E,4E)-octadienoyl-CoA. It catalyses the reaction (3E,5Z,8Z,11Z,14Z)-eicosapentaenoyl-CoA = (2E,4E,8Z,11Z,14Z)-eicosapentaenoyl-CoA. The protein operates within lipid metabolism; fatty acid beta-oxidation. Functionally, isomerization of 3-trans,5-cis-dienoyl-CoA to 2-trans,4-trans-dienoyl-CoA. In Pongo abelii (Sumatran orangutan), this protein is Delta(3,5)-Delta(2,4)-dienoyl-CoA isomerase, mitochondrial (ECH1).